The sequence spans 277 residues: Bifunctional protein FolD (277 aa).

Residues 164–166 (GRS), serine 189, and threonine 230 each bind NADP(+).

This sequence belongs to the tetrahydrofolate dehydrogenase/cyclohydrolase family. In terms of assembly, homodimer.

The catalysed reaction is (6R)-5,10-methylene-5,6,7,8-tetrahydrofolate + NADP(+) = (6R)-5,10-methenyltetrahydrofolate + NADPH. It carries out the reaction (6R)-5,10-methenyltetrahydrofolate + H2O = (6R)-10-formyltetrahydrofolate + H(+). The protein operates within one-carbon metabolism; tetrahydrofolate interconversion. Catalyzes the oxidation of 5,10-methylenetetrahydrofolate to 5,10-methenyltetrahydrofolate and then the hydrolysis of 5,10-methenyltetrahydrofolate to 10-formyltetrahydrofolate. The chain is Bifunctional protein FolD from Clostridium perfringens (strain ATCC 13124 / DSM 756 / JCM 1290 / NCIMB 6125 / NCTC 8237 / Type A).